The primary structure comprises 377 residues: Chaperone protein DnaJ (377 aa).

Residues 5–70 (DYYEILGVAK…QKRAAYDQFG (66 aa)) enclose the J domain. The CR-type zinc-finger motif lies at 130-208 (GTEVKIRVPS…CHGQGRVEEH (79 aa)). Zn(2+) contacts are provided by Cys143, Cys146, Cys160, Cys163, Cys182, Cys185, Cys196, and Cys199. 4 CXXCXGXG motif repeats span residues 143–150 (CGECHGSG), 160–167 (CGTCGGVG), 182–189 (CPRCHGTG), and 196–203 (CKACHGQG).

This sequence belongs to the DnaJ family. Homodimer. The cofactor is Zn(2+).

It is found in the cytoplasm. Participates actively in the response to hyperosmotic and heat shock by preventing the aggregation of stress-denatured proteins and by disaggregating proteins, also in an autonomous, DnaK-independent fashion. Unfolded proteins bind initially to DnaJ; upon interaction with the DnaJ-bound protein, DnaK hydrolyzes its bound ATP, resulting in the formation of a stable complex. GrpE releases ADP from DnaK; ATP binding to DnaK triggers the release of the substrate protein, thus completing the reaction cycle. Several rounds of ATP-dependent interactions between DnaJ, DnaK and GrpE are required for fully efficient folding. Also involved, together with DnaK and GrpE, in the DNA replication of plasmids through activation of initiation proteins. This chain is Chaperone protein DnaJ, found in Thioalkalivibrio sulfidiphilus (strain HL-EbGR7).